A 300-amino-acid polypeptide reads, in one-letter code: Estradiol 17-beta-dehydrogenase 11 (300 aa).

The N-terminal stretch at 1–19 (MKFLLDILLLLPLLIVCSL) is a signal peptide. 40–64 (LITGAGHGIGRLTAYEFAKLKSKLV) contacts NADP(+). Ser172 contacts substrate. Tyr185 (proton acceptor) is an active-site residue.

The protein belongs to the short-chain dehydrogenases/reductases (SDR) family. 17-beta-HSD 3 subfamily. In terms of tissue distribution, present at high level in steroidogenic cells such as syncytiotrophoblasts, sebaceous gland, Leydig cells, and granulosa cells of the dominant follicle and corpus luteum. In lung, it is detected in the ciliated epithelium and in acini of adult trachea, in bronchioles, but not in alveoli. In the eye, it is detected in the nonpigmented epithelium of the ciliary body and, at lower level, in the inner nuclear layer of the retina (at protein level). Widely expressed. Highly expressed in retina, pancreas, kidney, liver, lung, adrenal, small intestine, ovary and heart.

It localises to the endoplasmic reticulum. The protein localises to the lipid droplet. The catalysed reaction is 17beta-estradiol + NAD(+) = estrone + NADH + H(+). The enzyme catalyses 17beta-estradiol + NADP(+) = estrone + NADPH + H(+). Can convert androstan-3-alpha,17-beta-diol (3-alpha-diol) to androsterone in vitro, suggesting that it may participate in androgen metabolism during steroidogenesis. May act by metabolizing compounds that stimulate steroid synthesis and/or by generating metabolites that inhibit it. Has no activity toward DHEA (dehydroepiandrosterone), or A-dione (4-androste-3,17-dione), and only a slight activity toward testosterone to A-dione. Tumor-associated antigen in cutaneous T-cell lymphoma. The chain is Estradiol 17-beta-dehydrogenase 11 (HSD17B11) from Homo sapiens (Human).